The following is a 110-amino-acid chain: Large ribosomal subunit protein uL22 (110 aa).

Belongs to the universal ribosomal protein uL22 family. In terms of assembly, part of the 50S ribosomal subunit.

This protein binds specifically to 23S rRNA; its binding is stimulated by other ribosomal proteins, e.g. L4, L17, and L20. It is important during the early stages of 50S assembly. It makes multiple contacts with different domains of the 23S rRNA in the assembled 50S subunit and ribosome. Functionally, the globular domain of the protein is located near the polypeptide exit tunnel on the outside of the subunit, while an extended beta-hairpin is found that lines the wall of the exit tunnel in the center of the 70S ribosome. This is Large ribosomal subunit protein uL22 from Saccharophagus degradans (strain 2-40 / ATCC 43961 / DSM 17024).